The chain runs to 667 residues: Gamma-tubulin complex component 4 (667 aa).

The disordered stretch occupies residues 425-445; the sequence is HKADATQAREGPSRETSPREA.

Belongs to the TUBGCP family. In terms of assembly, component of the gamma-tubulin ring complex (gTuRC) consisting of TUBGCP2, TUBGCP3, TUBGCP4, TUBGCP5 and TUBGCP6 and gamma-tubulin TUBG1 or TUBG2. TUBGCP2, TUBGCP3, TUBGCP4, TUBGCP5 and TUBGCP6 assemble in a 5:5:2:1:1 stoichiometry; each is associated with a gamma-tubulin, thereby arranging 14 gamma-tubulins in a helical manner. Gamma-tubulin at the first position is blocked by TUBGCP3 at the last position, allowing 13 protafilaments to grow into a microtubule. The gTuRC (via TUBGCP3 and TUBGCP6) interacts with ACTB and MZT1; the interactions form a luminal bridge that stabilizes the initial structure during complex assembly. The gTuRC (via TUBGCP2) interacts with MZT2A/MZT2B and CDK5RAP2 (via CM1 motif); the interactions play a role in gTuRC activation. Interacts with NINL. Interacts with ATF5; the ATF5:PCNT:polyglutamylated tubulin (PGT) tripartite unites the mother centriole and the pericentriolar material (PCM) in the centrosome. Ubiquitously expressed.

The protein localises to the cytoplasm. It is found in the cytoskeleton. It localises to the microtubule organizing center. Its subcellular location is the centrosome. Component of the gamma-tubulin ring complex (gTuRC) which mediates microtubule nucleation. The gTuRC regulates the minus-end nucleation of alpha-beta tubulin heterodimers that grow into microtubule protafilaments, a critical step in centrosome duplication and spindle formation. This chain is Gamma-tubulin complex component 4 (TUBGCP4), found in Homo sapiens (Human).